The following is a 926-amino-acid chain: Peripheral plasma membrane protein CASK (926 aa).

In terms of domain architecture, Protein kinase spans 12 to 276; the sequence is YELCEVIGKG…VYEALNHPWL (265 aa). ATP is bound by residues 18–26 and Lys-41; that span reads IGKGPFSVV. A Phosphoserine modification is found at Ser-51. The active site involves Asp-141. Phosphoserine; by autocatalysis is present on residues Ser-151 and Ser-155. Position 182 is a phosphothreonine (Thr-182). Lys-192 and Ser-313 each carry phosphoserine. A calmodulin-binding region spans residues 305-315; sequence KGAVLAAVSSH. 2 L27 domains span residues 343–398 and 402–455; these read AERA…SPQI and PSDA…YSDE. The interval 482–909 is required for interaction with NRXN1 (via C-terminal tail); sequence MENVTRVRLV…DETIRHLEEA (428 aa). A PDZ domain is found at 489-564; it reads RLVQFQKNTD…MLREMRGSIT (76 aa). A phosphoserine mark is found at Tyr-571 and Ser-577. Positions 574–610 are disordered; sequence QSSSCERDSPSTSRQSPANGHSSTNNSVSDLPSTTQP. An SH3 domain is found at 612–682; it reads GRQIYVRAQF…PSPELQEWRV (71 aa). A Guanylate kinase-like domain is found at 739–911; that stretch reads RKTLVLLGAH…TIRHLEEAVE (173 aa).

It in the N-terminal section; belongs to the protein kinase superfamily. CAMK Ser/Thr protein kinase family. CaMK subfamily. This sequence belongs to the MAGUK family. In terms of assembly, CASK and LIN7 form two mutually exclusive tripartite complexes with APBA1 or CASKIN1. Component of the brain-specific heterotrimeric complex (LIN-10-LIN-2-LIN-7 complex) composed of at least APBA1, CASK, and LIN7, which associates with the motor protein KIF17 to transport vesicles along microtubules. Forms a heterotrimeric complex with DLG1 and LIN7B via their L27 domains. Identified in a complex with ACTN4, IQGAP1, MAGI2, NPHS1, SPTAN1 and SPTBN1. Part of a complex containing CASK, TBR1 and TSPYL2. Interacts with WHRN. Interacts (via the PDZ, SH3 and guanylate kinase-like domains) with NRXN1 (via C-terminus). Interacts with CASKIN1, APBA1, LIN7(A/B/C) and L27 domain of DLG1 and isoform 2 of DLG4. Interacts with FCHSD2. Interacts with KIRREL3. Interacts with TBR1. Interacts with TSPYL2. The cofactor is Unlike other protein kinases, does not require a divalent cation such as magnesium for catalytic activity.. As to expression, ubiquitous. Expression is significantly greater in brain relative to kidney, lung, and liver and in fetal brain and kidney relative to lung and liver.

The protein localises to the nucleus. It is found in the cytoplasm. Its subcellular location is the cell membrane. It carries out the reaction L-seryl-[protein] + ATP = O-phospho-L-seryl-[protein] + ADP + H(+). The catalysed reaction is L-threonyl-[protein] + ATP = O-phospho-L-threonyl-[protein] + ADP + H(+). Its activity is regulated as follows. Differs from archetypal CaMK members in that the kinase domain exhibits a constitutively active conformation and the autoinhibitory region does not engage in direct contact with the ATP-binding cleft, although it still binds Ca(2+)/CAM. Functionally, multidomain scaffolding Mg(2+)-independent protein kinase that catalyzes the phosphotransfer from ATP to proteins such as NRXN1, and plays a role in synaptic transmembrane protein anchoring and ion channel trafficking. Contributes to neural development and regulation of gene expression via interaction with the transcription factor TBR1. Binds to cell-surface proteins, including amyloid precursor protein, neurexins and syndecans. May mediate a link between the extracellular matrix and the actin cytoskeleton via its interaction with syndecan and with the actin/spectrin-binding protein 4.1. Component of the LIN-10-LIN-2-LIN-7 complex, which associates with the motor protein KIF17 to transport vesicles containing N-methyl-D-aspartate (NMDA) receptor subunit NR2B along microtubules. This Homo sapiens (Human) protein is Peripheral plasma membrane protein CASK.